Here is a 295-residue protein sequence, read N- to C-terminus: RNA polymerase sigma-C factor (295 aa).

The short motif at 73–86 (DLIQEANIGLMKAV) is the Polymerase core binding element. The segment at residues 250 to 269 (LSELGEHFGFSRERARQLEI) is a DNA-binding region (H-T-H motif).

The protein belongs to the sigma-70 factor family.

Functionally, sigma factors are initiation factors that promote the attachment of RNA polymerase to specific initiation sites and are then released. This sigma factor is essential for normal fruiting body formation. The sequence is that of RNA polymerase sigma-C factor (sigC) from Myxococcus xanthus.